The primary structure comprises 109 residues: Cell division protein ZapA (109 aa).

Residues 21–99 (PEQRDALNQA…IEQALLEQGR (79 aa)) adopt a coiled-coil conformation.

This sequence belongs to the ZapA family. Type 1 subfamily. As to quaternary structure, homodimer. Interacts with FtsZ.

The protein localises to the cytoplasm. Its function is as follows. Activator of cell division through the inhibition of FtsZ GTPase activity, therefore promoting FtsZ assembly into bundles of protofilaments necessary for the formation of the division Z ring. It is recruited early at mid-cell but it is not essential for cell division. The protein is Cell division protein ZapA of Klebsiella pneumoniae subsp. pneumoniae (strain ATCC 700721 / MGH 78578).